The chain runs to 489 residues: Cysteine--tRNA ligase (489 aa).

Cys-29 contacts Zn(2+). The 'HIGH' region signature appears at Ile-31–His-41. Cys-209, His-234, and Glu-238 together coordinate Zn(2+). The 'KMSKS' region signature appears at Lys-266–Ser-270. Lys-269 is a binding site for ATP.

This sequence belongs to the class-I aminoacyl-tRNA synthetase family. In terms of assembly, monomer. It depends on Zn(2+) as a cofactor.

Its subcellular location is the cytoplasm. It catalyses the reaction tRNA(Cys) + L-cysteine + ATP = L-cysteinyl-tRNA(Cys) + AMP + diphosphate. The sequence is that of Cysteine--tRNA ligase from Desulfotalea psychrophila (strain LSv54 / DSM 12343).